The sequence spans 198 residues: Cerebellin-4 (198 aa).

Positions 1-24 (MGSARRALSVVPAVLLILVLPVWA) are cleaved as a signal peptide. N-linked (GlcNAc...) asparagine glycans are attached at residues asparagine 26 and asparagine 85. Residues 63–198 (AANSKVAFSA…TFSGFLVFPL (136 aa)) form the C1q domain.

As to quaternary structure, homohexamer; disulfide-linked homotrimers. The trimers are assembled via the globular C1q domains. The trimers associate via N-terminal cysteine residues to form disulfide-linked hexamers. May form oligomers with CBLN1, CBLN2 and CBLN3 prior to secretion. Once secreted, does not interact with other CBLN family members. Strongly interacts with DCC in a NTN1-displaceable fashion. Weakly binds to NRXN1 and NRXN2 long and short isoforms produced by alternative promoter usage. Interaction with NRXN3 short isoform is hardly detectable; no interaction at all with NRXN3 long isoform. Does not interact with NEO1, GRID1 and GRID2. Post-translationally, sialoglycoprotein. In terms of tissue distribution, expressed in brain with high levels in particular thalamic nuclei. In the thalamus, predominantly expressed in neurons within the parafascicular nucleus. Found in the hippocampus, mostly in the dendrites and somata of pyramidal neurons (at protein level). Very low or no expression in most other brain regions. Highly expressed in the ventral medial habenula.

The protein localises to the secreted. Its subcellular location is the synapse. In terms of biological role, acts as a synaptic organizer in specific subsets of neurons in the brain. Essential for the formation and maintenance of inhibitory GABAergic synapses. Promotes the development of dendrite-targeting inhibitory GABAergic synapses made by somatostatin-positive interneurons. May contribute to the function of ventral medial habenula region of the brain implicated in the regulation of anxiety-related behaviors. May play a role in CBLN3 export from the endoplasmic reticulum and secretion. This Mus musculus (Mouse) protein is Cerebellin-4 (Cbln4).